The primary structure comprises 131 residues: Global transcriptional regulator Spx (131 aa).

A disulfide bond links cysteine 10 and cysteine 13.

It belongs to the ArsC family. Spx subfamily. In terms of assembly, interacts with the C-terminal domain of the alpha subunit of the RNAP.

It localises to the cytoplasm. Its function is as follows. Global transcriptional regulator that plays a key role in stress response and exerts either positive or negative regulation of genes. Acts by interacting with the C-terminal domain of the alpha subunit of the RNA polymerase (RNAP). This interaction can enhance binding of RNAP to the promoter region of target genes and stimulate their transcription, or block interaction of RNAP with activator. The chain is Global transcriptional regulator Spx from Shouchella clausii (strain KSM-K16) (Alkalihalobacillus clausii).